The following is a 315-amino-acid chain: GTP cyclohydrolase MptA (315 aa).

Belongs to the GTP cyclohydrolase IV family. As to quaternary structure, homodimer. The cofactor is Fe(2+).

The catalysed reaction is GTP + H2O = 7,8-dihydroneopterin 2',3'-cyclic phosphate + formate + diphosphate + H(+). The protein operates within cofactor biosynthesis; 5,6,7,8-tetrahydromethanopterin biosynthesis. Converts GTP to 7,8-dihydro-D-neopterin 2',3'-cyclic phosphate, the first intermediate in the biosynthesis of coenzyme methanopterin. The chain is GTP cyclohydrolase MptA from Methanococcus maripaludis (strain C5 / ATCC BAA-1333).